The primary structure comprises 113 residues: Nitrogenase-stabilizing/protective protein NifW (113 aa).

It belongs to the NifW family. As to quaternary structure, homotrimer; associates with NifD.

Its function is as follows. May protect the nitrogenase Fe-Mo protein from oxidative damage. This chain is Nitrogenase-stabilizing/protective protein NifW, found in Polaromonas naphthalenivorans (strain CJ2).